A 312-amino-acid chain; its full sequence is Ribose-phosphate pyrophosphokinase (312 aa).

Residues 34–36 (DLE) and 93–94 (RQ) each bind ATP. Residues H127 and D168 each contribute to the Mg(2+) site. Residue K192 is part of the active site. D-ribose 5-phosphate is bound by residues R194, D218, and 222–226 (DSAGT).

The protein belongs to the ribose-phosphate pyrophosphokinase family. Class I subfamily. As to quaternary structure, homohexamer. It depends on Mg(2+) as a cofactor.

It localises to the cytoplasm. The catalysed reaction is D-ribose 5-phosphate + ATP = 5-phospho-alpha-D-ribose 1-diphosphate + AMP + H(+). It participates in metabolic intermediate biosynthesis; 5-phospho-alpha-D-ribose 1-diphosphate biosynthesis; 5-phospho-alpha-D-ribose 1-diphosphate from D-ribose 5-phosphate (route I): step 1/1. Functionally, involved in the biosynthesis of the central metabolite phospho-alpha-D-ribosyl-1-pyrophosphate (PRPP) via the transfer of pyrophosphoryl group from ATP to 1-hydroxyl of ribose-5-phosphate (Rib-5-P). This chain is Ribose-phosphate pyrophosphokinase, found in Caulobacter vibrioides (strain ATCC 19089 / CIP 103742 / CB 15) (Caulobacter crescentus).